Here is a 223-residue protein sequence, read N- to C-terminus: Alpha-enolase (223 aa).

S8 is a Mg(2+) binding site. Residue Y12 is modified to Phosphotyrosine. At K25 the chain carries N6-acetyllysine. E39 serves as a coordination point for substrate. K61 is modified (N6-acetyllysine). E69 serves as the catalytic Proton donor. Position 87 is an N6-acetyllysine; alternate (K87). The residue at position 87 (K87) is an N6-malonyllysine; alternate. Position 87 is an N6-succinyllysine; alternate (K87). Mg(2+) is bound by residues D99 and D119. D119 contacts substrate. Residues K133 and K141 each carry the N6-acetyllysine modification. K141 functions as the Proton acceptor in the catalytic mechanism. Substrate is bound by residues 168–171 and K192; that span reads SHRS. The required for interaction with PLG stretch occupies residues 202–223; it reads YNQILRIEEELGSKSFRNPLAK. K215 carries the N6-acetyllysine; alternate modification. K215 bears the N6-malonyllysine; alternate mark. At K215 the chain carries N6-succinyllysine; alternate.

The protein belongs to the enolase family. In terms of assembly, mammalian enolase is composed of 3 isozyme subunits, alpha, beta and gamma, which can form homodimers or heterodimers which are cell-type and development-specific. ENO1 interacts with PLG in the neuronal plasma membrane and promotes its activation. The C-terminal lysine is required for this binding. Interacts with ENO4 and PGAM2. Interacts with CMTM6. The cofactor is Mg(2+). ISGylated. In terms of processing, lysine 2-hydroxyisobutyrylation (Khib) by p300/EP300 activates the phosphopyruvate hydratase activity.

The protein resides in the cytoplasm. It localises to the cell membrane. The enzyme catalyses (2R)-2-phosphoglycerate = phosphoenolpyruvate + H2O. It functions in the pathway carbohydrate degradation; glycolysis; pyruvate from D-glyceraldehyde 3-phosphate: step 4/5. Functionally, glycolytic enzyme the catalyzes the conversion of 2-phosphoglycerate to phosphoenolpyruvate. In addition to glycolysis, involved in various processes such as growth control, hypoxia tolerance and allergic responses. May also function in the intravascular and pericellular fibrinolytic system due to its ability to serve as a receptor and activator of plasminogen on the cell surface of several cell-types such as leukocytes and neurons. Stimulates immunoglobulin production. The protein is Alpha-enolase of Mesocricetus auratus (Golden hamster).